Consider the following 503-residue polypeptide: Cobyric acid synthase (503 aa).

The GATase cobBQ-type domain maps to 260–453 (KIGVAAIYFP…FHALFDESSV (194 aa)). Cys-341 functions as the Nucleophile in the catalytic mechanism. The active site involves His-445.

It belongs to the CobB/CobQ family. CobQ subfamily.

Its pathway is cofactor biosynthesis; adenosylcobalamin biosynthesis. In terms of biological role, catalyzes amidations at positions B, D, E, and G on adenosylcobyrinic A,C-diamide. NH(2) groups are provided by glutamine, and one molecule of ATP is hydrogenolyzed for each amidation. The polypeptide is Cobyric acid synthase (Pelodictyon phaeoclathratiforme (strain DSM 5477 / BU-1)).